We begin with the raw amino-acid sequence, 427 residues long: Enolase (427 aa).

Gln-163 is a (2R)-2-phosphoglycerate binding site. The Proton donor role is filled by Glu-205. Mg(2+) is bound by residues Asp-242, Glu-285, and Asp-312. (2R)-2-phosphoglycerate-binding residues include Lys-337, Arg-366, Ser-367, and Lys-388. Lys-337 serves as the catalytic Proton acceptor.

The protein belongs to the enolase family. It depends on Mg(2+) as a cofactor.

Its subcellular location is the cytoplasm. The protein resides in the secreted. The protein localises to the cell surface. It catalyses the reaction (2R)-2-phosphoglycerate = phosphoenolpyruvate + H2O. The protein operates within carbohydrate degradation; glycolysis; pyruvate from D-glyceraldehyde 3-phosphate: step 4/5. Functionally, catalyzes the reversible conversion of 2-phosphoglycerate (2-PG) into phosphoenolpyruvate (PEP). It is essential for the degradation of carbohydrates via glycolysis. In Xanthobacter autotrophicus (strain ATCC BAA-1158 / Py2), this protein is Enolase.